A 540-amino-acid polypeptide reads, in one-letter code: CTP synthase (540 aa).

Positions 1 to 267 (MTKYIFVTGG…DQKVCDFLHL (267 aa)) are amidoligase domain. S13 is a binding site for CTP. Position 13 (S13) interacts with UTP. 14 to 19 (SLGKGI) provides a ligand contact to ATP. Y54 is a binding site for L-glutamine. An ATP-binding site is contributed by D71. The Mg(2+) site is built by D71 and E141. Residues 148–150 (DIE), 188–193 (KTKPTQ), and K224 each bind CTP. UTP contacts are provided by residues 188–193 (KTKPTQ) and K224. In terms of domain architecture, Glutamine amidotransferase type-1 spans 294 to 537 (TITLVGKYVE…IGAASGLPAQ (244 aa)). G356 serves as a coordination point for L-glutamine. The Nucleophile; for glutamine hydrolysis role is filled by C383. L-glutamine is bound by residues 384-387 (LGMQ), E407, and R465. Catalysis depends on residues H510 and E512.

This sequence belongs to the CTP synthase family. Homotetramer.

The catalysed reaction is UTP + L-glutamine + ATP + H2O = CTP + L-glutamate + ADP + phosphate + 2 H(+). It carries out the reaction L-glutamine + H2O = L-glutamate + NH4(+). It catalyses the reaction UTP + NH4(+) + ATP = CTP + ADP + phosphate + 2 H(+). It functions in the pathway pyrimidine metabolism; CTP biosynthesis via de novo pathway; CTP from UDP: step 2/2. With respect to regulation, allosterically activated by GTP, when glutamine is the substrate; GTP has no effect on the reaction when ammonia is the substrate. The allosteric effector GTP functions by stabilizing the protein conformation that binds the tetrahedral intermediate(s) formed during glutamine hydrolysis. Inhibited by the product CTP, via allosteric rather than competitive inhibition. Functionally, catalyzes the ATP-dependent amination of UTP to CTP with either L-glutamine or ammonia as the source of nitrogen. Regulates intracellular CTP levels through interactions with the four ribonucleotide triphosphates. The sequence is that of CTP synthase from Lactobacillus johnsonii (strain CNCM I-12250 / La1 / NCC 533).